The sequence spans 432 residues: Serine--tRNA ligase (432 aa).

An L-serine-binding site is contributed by 237–239; that stretch reads TSE. Residue 268–270 coordinates ATP; that stretch reads RSE. Residue E291 coordinates L-serine. 355 to 358 contacts ATP; it reads EISS. Residue S390 coordinates L-serine.

It belongs to the class-II aminoacyl-tRNA synthetase family. Type-1 seryl-tRNA synthetase subfamily. As to quaternary structure, homodimer. The tRNA molecule binds across the dimer.

It is found in the cytoplasm. It carries out the reaction tRNA(Ser) + L-serine + ATP = L-seryl-tRNA(Ser) + AMP + diphosphate + H(+). It catalyses the reaction tRNA(Sec) + L-serine + ATP = L-seryl-tRNA(Sec) + AMP + diphosphate + H(+). It participates in aminoacyl-tRNA biosynthesis; selenocysteinyl-tRNA(Sec) biosynthesis; L-seryl-tRNA(Sec) from L-serine and tRNA(Sec): step 1/1. In terms of biological role, catalyzes the attachment of serine to tRNA(Ser). Is also able to aminoacylate tRNA(Sec) with serine, to form the misacylated tRNA L-seryl-tRNA(Sec), which will be further converted into selenocysteinyl-tRNA(Sec). The protein is Serine--tRNA ligase of Methylobacillus flagellatus (strain ATCC 51484 / DSM 6875 / VKM B-1610 / KT).